The following is a 377-amino-acid chain: Succinyl-diaminopimelate desuccinylase (377 aa).

His-66 contacts Zn(2+). Asp-68 is a catalytic residue. Residue Asp-99 participates in Zn(2+) binding. Catalysis depends on Glu-133, which acts as the Proton acceptor. Glu-134, Glu-163, and His-349 together coordinate Zn(2+).

Belongs to the peptidase M20A family. DapE subfamily. In terms of assembly, homodimer. Zn(2+) serves as cofactor. The cofactor is Co(2+).

The enzyme catalyses N-succinyl-(2S,6S)-2,6-diaminopimelate + H2O = (2S,6S)-2,6-diaminopimelate + succinate. It functions in the pathway amino-acid biosynthesis; L-lysine biosynthesis via DAP pathway; LL-2,6-diaminopimelate from (S)-tetrahydrodipicolinate (succinylase route): step 3/3. In terms of biological role, catalyzes the hydrolysis of N-succinyl-L,L-diaminopimelic acid (SDAP), forming succinate and LL-2,6-diaminopimelate (DAP), an intermediate involved in the bacterial biosynthesis of lysine and meso-diaminopimelic acid, an essential component of bacterial cell walls. This Legionella pneumophila (strain Corby) protein is Succinyl-diaminopimelate desuccinylase.